We begin with the raw amino-acid sequence, 427 residues long: Forkhead box protein A1-B (427 aa).

The fork-head DNA-binding region spans 157–251; the sequence is KPPYSYISLI…ENGCYLRRQK (95 aa). Residues 256–272 are compositionally biased toward basic and acidic residues; it reads EKTQGGKGNQDGRKDHS. The disordered stretch occupies residues 256–336; sequence EKTQGGKGNQ…HQNHSTHSLA (81 aa). Residues 285 to 302 show a composition bias toward low complexity; the sequence is SSQMDSSSSMSNPSSSPQ. A compositionally biased stretch (polar residues) spans 323 to 334; the sequence is PLSSHQNHSTHS.

As to expression, present in the vegetal pole and marginal zone but not the animal pole of gastrulae and in equal levels in the dorsal and ventral halves of both gastrulae and neurulae. At neurula stage, expressed in the notochord. During tailbud stages, expressed in the foregut, brain, hypocord, neural floor plate and in two lines of cells just dorsal and ventral to the notochord. Expressed in the adult liver.

It localises to the nucleus. In terms of biological role, probable transcription factor. The protein is Forkhead box protein A1-B (foxa1-b) of Xenopus laevis (African clawed frog).